Here is a 461-residue protein sequence, read N- to C-terminus: Serine/threonine-protein kinase ppk24, mitochondrial (461 aa).

The region spanning 120 to 416 (FQHLKSIAKG…LDSILGTAWV (297 aa)) is the Protein kinase domain. ATP is bound by residues 126–134 (IAKGATSTI) and K153. D256 serves as the catalytic Proton acceptor.

Belongs to the protein kinase superfamily. Ser/Thr protein kinase family.

The protein resides in the mitochondrion. The enzyme catalyses L-seryl-[protein] + ATP = O-phospho-L-seryl-[protein] + ADP + H(+). It catalyses the reaction L-threonyl-[protein] + ATP = O-phospho-L-threonyl-[protein] + ADP + H(+). In terms of biological role, has a role late in meiosis. This Schizosaccharomyces pombe (strain 972 / ATCC 24843) (Fission yeast) protein is Serine/threonine-protein kinase ppk24, mitochondrial (ppk24).